We begin with the raw amino-acid sequence, 151 residues long: MTELKEQLSLLGRKTEYKQDYAPEVLEAFDNKHPENDYWVRFNCPEFTSLCPITGQPDFAEIRISYLPDVKMVESKSLKLYLFSFRNHGAFHEDCVNIIMKDLIRLMDPKYIEVTGIFTPRGGISIYPYANYGRPGTKYEEMATHRLMNHE.

Cys51 serves as the catalytic Thioimide intermediate. Catalysis depends on Asp58, which acts as the Proton donor. Residues 73–75 and 92–93 each bind substrate; these read VES and HE.

The protein belongs to the GTP cyclohydrolase I family. QueF type 1 subfamily.

Its subcellular location is the cytoplasm. The catalysed reaction is 7-aminomethyl-7-carbaguanine + 2 NADP(+) = 7-cyano-7-deazaguanine + 2 NADPH + 3 H(+). Its pathway is tRNA modification; tRNA-queuosine biosynthesis. Catalyzes the NADPH-dependent reduction of 7-cyano-7-deazaguanine (preQ0) to 7-aminomethyl-7-deazaguanine (preQ1). The protein is NADPH-dependent 7-cyano-7-deazaguanine reductase of Bacteroides fragilis (strain YCH46).